A 174-amino-acid polypeptide reads, in one-letter code: Small ribosomal subunit protein uS5 (174 aa).

An S5 DRBM domain is found at 17-80 (WQERVVQIRR…ADGKKHLIDV (64 aa)).

This sequence belongs to the universal ribosomal protein uS5 family. Part of the 30S ribosomal subunit. Contacts proteins S4 and S8.

With S4 and S12 plays an important role in translational accuracy. Functionally, located at the back of the 30S subunit body where it stabilizes the conformation of the head with respect to the body. This is Small ribosomal subunit protein uS5 from Thermosynechococcus vestitus (strain NIES-2133 / IAM M-273 / BP-1).